Reading from the N-terminus, the 941-residue chain is MYQGEFGLNMKLGYGKFSWPTGESYHGQFYRDHCHGLGTYMWPDGSSFTGTFYLSHREGYGTMYMKTRLFQGLYKADQRFGPGVETYPDGSQDVGLWFREQLIKLCTQIPSGFSLLRYPEFSSFITHSPARISLSEEEKTEWGLQEGQDPFFYDYKRFLLNDNLTLPPEMYVYSTNSDHLPMTSSFRKELDARIFLNEIPPFVEDGEPWFIINETPLLVKIQKQTYKFRNKPAHTSWNMGAILEGKRSGFAPCGPKEQLSMEMILKAEEGNHEWICRILKDNFASADVADAKGYTVLAAAATHCHNDIVNLLLDCGADVNKCSDEGLTALSMCFLLHYPAQSFKPNVAERTIPEPQEPPKFPVVPILSSSFMDTNLESLYYEVNVPSQGSYELRPPPAPLLLPRVSGSHEGGHFQDTGQCGGSIDHRSSSLKGDSPLVKGSLGHVESGLEDVLGNTDRGSLCSAETKFESNVCVCDFSIELSQAMLERSAQSHSLLKMASPSPCTSSFDKGTMRRMALSMIERRKRWRTIKLLLRRGADPNLCCVPMQVLFLAVKAGDVDGVRLLLEHGARTDICFPPQLSTLTPLHIAAALPGEEGVQIVELLLHAITDVDAKASDEDDTYKPGKLDLLPSSLKLSNEPGPPQAYYSTDTALPEEGGRTALHMACEREDDNKCARDIVRLLLSHGANPNLLWSGHSPLSLSIASGNELVVKELLTQGADPNLPLTKGLGSALCVACDLTYEHQRNMDSKLALIDRLISHGADILKPVMLRQGEKEAVGTAVDYGYFRFFQDRRIARCPFHTLMPAERETFLARKRLLEYMGLQLRQAVFAKESQWDPTWLYLCKRAELIPSHRMKKKGPSLPRGLDVKEQGQIPFFKFCYQCGRSIGVRLLPCPRCYGILTCSKYCKTKAWTEFHKKDCGDLVAIVTQLEQVSRRREEFQ.

MORN repeat units lie at residues 2-24 (YQGE…TGES), 25-47 (YHGQ…DGSS), and 70-92 (FQGL…DGSQ). 7 ANK repeats span residues 292-321 (KGYT…DVNK), 513-542 (MRRM…DPNL), 545-574 (VPMQ…RTDI), 581-613 (STLT…DVDA), 657-691 (GGRT…NPNL), 694-723 (SGHS…DPNL), and 737-766 (CDLT…DILK). Positions 880, 883, 894, 897, 903, 907, 916, and 920 each coordinate Zn(2+). The MYND-type zinc-finger motif lies at 880–920 (CYQCGRSIGVRLLPCPRCYGILTCSKYCKTKAWTEFHKKDC).

The chain is Ankyrin repeat and MYND domain-containing protein 1 (ANKMY1) from Homo sapiens (Human).